Here is a 341-residue protein sequence, read N- to C-terminus: Protein DOWNY MILDEW RESISTANCE 6 (341 aa).

The Fe2OG dioxygenase domain maps to 188–288; sequence QGQHMAVNYY…RLSVASFLCP (101 aa). Fe cation is bound by residues His212, Asp214, and His269. Arg279 is a binding site for 2-oxoglutarate.

The protein belongs to the iron/ascorbate-dependent oxidoreductase family. It depends on Fe(2+) as a cofactor.

The enzyme catalyses salicylate + NADH + O2 + H(+) = 2,3-dihydroxybenzoate + NAD(+) + H2O. Functionally, converts salicylic acid (SA) to 2,3-dihydroxybenzoic acid (2,3-DHBA). Suppressor of immunity. Regulates negatively defense associated genes expression (e.g. PR-1, PR-2, and PR-5). Negative regulator of defense against Hyaloperonospora arabidopsidis. In terms of biological role, (Microbial infection) Required for susceptibility to the downy mildew pathogen Hyaloperonospora arabidopsidis. (Microbial infection) Required for susceptibility to Pseudomonas syringae pv. tomato DC3000. Its function is as follows. (Microbial infection) Required for susceptibility to the oomycete Phytophthora capsici. This is Protein DOWNY MILDEW RESISTANCE 6 from Arabidopsis thaliana (Mouse-ear cress).